A 228-amino-acid chain; its full sequence is Phosphatidate cytidylyltransferase (228 aa).

The next 6 helical transmembrane spans lie at 31 to 51 (FVIA…LVGL), 65 to 85 (INYL…LIFL), 93 to 113 (LVIM…MIGG), 131 to 151 (WTGL…VSLI), 165 to 185 (IYLF…DLFI), and 206 to 226 (GVLD…CINI).

It belongs to the CDS family.

It is found in the cell membrane. The catalysed reaction is a 1,2-diacyl-sn-glycero-3-phosphate + CTP + H(+) = a CDP-1,2-diacyl-sn-glycerol + diphosphate. It participates in phospholipid metabolism; CDP-diacylglycerol biosynthesis; CDP-diacylglycerol from sn-glycerol 3-phosphate: step 3/3. The protein is Phosphatidate cytidylyltransferase (cdsA) of Rickettsia prowazekii (strain Madrid E).